The sequence spans 330 residues: Putative F-box protein At1g57690 (330 aa).

Residues 25–72 enclose the F-box domain; the sequence is VDIISSLPDVILQHILFSFQTKYAIRTSVLSKRWRHEADAINKALSQY.

The chain is Putative F-box protein At1g57690 from Arabidopsis thaliana (Mouse-ear cress).